Reading from the N-terminus, the 230-residue chain is 2-C-methyl-D-erythritol 4-phosphate cytidylyltransferase (230 aa).

The protein belongs to the IspD/TarI cytidylyltransferase family. IspD subfamily.

It carries out the reaction 2-C-methyl-D-erythritol 4-phosphate + CTP + H(+) = 4-CDP-2-C-methyl-D-erythritol + diphosphate. It participates in isoprenoid biosynthesis; isopentenyl diphosphate biosynthesis via DXP pathway; isopentenyl diphosphate from 1-deoxy-D-xylulose 5-phosphate: step 2/6. Catalyzes the formation of 4-diphosphocytidyl-2-C-methyl-D-erythritol from CTP and 2-C-methyl-D-erythritol 4-phosphate (MEP). In Nocardia farcinica (strain IFM 10152), this protein is 2-C-methyl-D-erythritol 4-phosphate cytidylyltransferase.